The following is a 117-amino-acid chain: Peptidyl-tRNA hydrolase (117 aa).

This sequence belongs to the PTH2 family.

Its subcellular location is the cytoplasm. It carries out the reaction an N-acyl-L-alpha-aminoacyl-tRNA + H2O = an N-acyl-L-amino acid + a tRNA + H(+). The natural substrate for this enzyme may be peptidyl-tRNAs which drop off the ribosome during protein synthesis. This Thermoplasma acidophilum (strain ATCC 25905 / DSM 1728 / JCM 9062 / NBRC 15155 / AMRC-C165) protein is Peptidyl-tRNA hydrolase.